The chain runs to 491 residues: NADH-quinone oxidoreductase subunit N 1 (491 aa).

Transmembrane regions (helical) follow at residues 15–35 (VLGM…VDMF), 41–61 (VLLT…ALDY), 77–97 (FGVL…LIAF), 105–125 (LSQG…LFLV), 130–150 (LVTI…LTGF), 165–185 (LLLG…IYGM), 211–231 (PILL…VSMF), 247–269 (PVTA…RFLN), 279–299 (WQLL…IVAV), 307–327 (MLAY…LAAS), 333–353 (AFTV…AVLI), 378–398 (LALA…TAGF), 416–436 (LAII…RVIV), and 459–479 (LGVI…NIFT).

This sequence belongs to the complex I subunit 2 family. NDH-1 is composed of 14 different subunits. Subunits NuoA, H, J, K, L, M, N constitute the membrane sector of the complex.

The protein localises to the cell membrane. It carries out the reaction a quinone + NADH + 5 H(+)(in) = a quinol + NAD(+) + 4 H(+)(out). Functionally, NDH-1 shuttles electrons from NADH, via FMN and iron-sulfur (Fe-S) centers, to quinones in the respiratory chain. The immediate electron acceptor for the enzyme in this species is believed to be ubiquinone. Couples the redox reaction to proton translocation (for every two electrons transferred, four hydrogen ions are translocated across the cytoplasmic membrane), and thus conserves the redox energy in a proton gradient. The protein is NADH-quinone oxidoreductase subunit N 1 of Herpetosiphon aurantiacus (strain ATCC 23779 / DSM 785 / 114-95).